The sequence spans 145 residues: Secreted RxLR effector protein 100 (145 aa).

The signal sequence occupies residues 1–19 (MRYLLLTFFTFHCQMVADA). The RxLR motif lies at 27–30 (RLLR). Positions 38-77 (SGEGKIEEAGMIVTTGAPTPENETMEHNEVPQSTTDTDQK) are disordered. N-linked (GlcNAc...) asparagine glycosylation occurs at N59.

This sequence belongs to the RxLR effector family.

It localises to the secreted. The protein localises to the host nucleus. Functionally, secreted effector that dos not suppress the host cell death induced by cell death-inducing proteins. This chain is Secreted RxLR effector protein 100, found in Plasmopara viticola (Downy mildew of grapevine).